Reading from the N-terminus, the 209-residue chain is Pyrrolidone-carboxylate peptidase (209 aa).

Active-site residues include glutamate 79, cysteine 142, and histidine 164.

Belongs to the peptidase C15 family. In terms of assembly, homotetramer.

Its subcellular location is the cytoplasm. It catalyses the reaction Release of an N-terminal pyroglutamyl group from a polypeptide, the second amino acid generally not being Pro.. In terms of biological role, removes 5-oxoproline from various penultimate amino acid residues except L-proline. The polypeptide is Pyrrolidone-carboxylate peptidase (Saccharolobus islandicus (strain Y.N.15.51 / Yellowstone #2) (Sulfolobus islandicus)).